We begin with the raw amino-acid sequence, 79 residues long: uncharacterized protein (79 aa).

Residues 1–37 (MQLDVFSRMMFGDAAKPTEEKEEEQQEEVSQVSQTND) are disordered.

This is an uncharacterized protein from Bacillus subtilis (strain 168).